A 471-amino-acid polypeptide reads, in one-letter code: Putative multidrug resistance protein MdtD (471 aa).

The Periplasmic portion of the chain corresponds to 1–11 (MTDLPDSTRWQ). The helical transmembrane segment at 12–32 (LWIVAFGFFMQSLDTTIVNTA) threads the bilayer. Residues 33–48 (LPSMAQSLGESPLHMH) lie on the Cytoplasmic side of the membrane. Residues 49–69 (MVIVSYVLTVAVMLPASGWLA) form a helical membrane-spanning segment. Residues 70-76 (DKVGVRN) lie on the Periplasmic side of the membrane. The helical transmembrane segment at 77-97 (IFFTAIVLFTLGSLFCALSGT) threads the bilayer. The Cytoplasmic portion of the chain corresponds to 98-101 (LNEL). Residues 102–124 (LLARALQGVGGAMMVPVGRLTVM) form a helical membrane-spanning segment. Over 125 to 137 (KIVPREQYMAAMT) the chain is Periplasmic. Residues 138-158 (FVTLPGQVGPLLGPALGGLLV) traverse the membrane as a helical segment. The Cytoplasmic portion of the chain corresponds to 159-164 (EYASWH). Residues 165-185 (WIFLINIPVGIIGAIATLMLM) traverse the membrane as a helical segment. Topologically, residues 186–196 (PNYTMQTRRFD) are periplasmic. Residues 197-217 (LSGFLLLAVGMAVLTLALDGS) form a helical membrane-spanning segment. Residues 218–224 (KGTGFSP) are Cytoplasmic-facing. Residues 225–245 (LAIAGLVAVGVVALVLYLLHA) traverse the membrane as a helical segment. Over 246 to 262 (QNNNRALFSLKLFRTRN) the chain is Periplasmic. Residues 263-283 (FSLGLAGSFAGRIGSGMLPFM) form a helical membrane-spanning segment. Residues 284–285 (TP) lie on the Cytoplasmic side of the membrane. Residues 286-306 (VFLQIGLGFSPFHAGLMMIPM) form a helical membrane-spanning segment. Residues 307–341 (VLGSMGMKRIVVQVVNRFGYRRVLVATTLGLSLVT) are Periplasmic-facing. Residues 342 to 362 (LLFMTTALLGWYYVLPFVLFL) form a helical membrane-spanning segment. Residues 363-395 (QGMVNSTRFSSMNTLTLKDLPDNLASSGNSLLS) are Cytoplasmic-facing. Residues 396–416 (MIMQLSMSIGVTIAGLLLGLF) traverse the membrane as a helical segment. Over 417–430 (GSQHVSVDSGTTQT) the chain is Periplasmic. Residues 431-451 (VFMYTWLSMAFIIALPAFVFA) form a helical membrane-spanning segment. Residues 452–471 (RVPSDTHQNVAISRRKRSAQ) are Cytoplasmic-facing.

Belongs to the major facilitator superfamily. TCR/Tet family.

It is found in the cell inner membrane. The polypeptide is Putative multidrug resistance protein MdtD (Escherichia coli O1:K1 / APEC).